The sequence spans 607 residues: Aspartate--tRNA(Asp/Asn) ligase (607 aa).

Position 168 (E168) interacts with L-aspartate. Positions 192 to 195 (QLFK) are aspartate. R214 is an L-aspartate binding site. Residues 214–216 (RDE) and Q223 each bind ATP. L-aspartate is bound at residue H449. Residue E483 coordinates ATP. Residue R490 participates in L-aspartate binding. Residue 535–538 (GWDR) coordinates ATP. The interval 578-607 (LEAGVDARPKPEARAQAGTAGPAAPVADPT) is disordered. The span at 580–590 (AGVDARPKPEA) shows a compositional bias: basic and acidic residues. A compositionally biased stretch (low complexity) spans 591–607 (RAQAGTAGPAAPVADPT).

It belongs to the class-II aminoacyl-tRNA synthetase family. Type 1 subfamily. Homodimer.

It is found in the cytoplasm. It catalyses the reaction tRNA(Asx) + L-aspartate + ATP = L-aspartyl-tRNA(Asx) + AMP + diphosphate. Its function is as follows. Aspartyl-tRNA synthetase with relaxed tRNA specificity since it is able to aspartylate not only its cognate tRNA(Asp) but also tRNA(Asn). Reaction proceeds in two steps: L-aspartate is first activated by ATP to form Asp-AMP and then transferred to the acceptor end of tRNA(Asp/Asn). The sequence is that of Aspartate--tRNA(Asp/Asn) ligase from Salinispora tropica (strain ATCC BAA-916 / DSM 44818 / JCM 13857 / NBRC 105044 / CNB-440).